Reading from the N-terminus, the 317-residue chain is Methionyl-tRNA formyltransferase (317 aa).

Residue 112 to 115 (SLLP) coordinates (6S)-5,6,7,8-tetrahydrofolate.

This sequence belongs to the Fmt family.

It carries out the reaction L-methionyl-tRNA(fMet) + (6R)-10-formyltetrahydrofolate = N-formyl-L-methionyl-tRNA(fMet) + (6S)-5,6,7,8-tetrahydrofolate + H(+). Attaches a formyl group to the free amino group of methionyl-tRNA(fMet). The formyl group appears to play a dual role in the initiator identity of N-formylmethionyl-tRNA by promoting its recognition by IF2 and preventing the misappropriation of this tRNA by the elongation apparatus. This chain is Methionyl-tRNA formyltransferase, found in Mycobacterium avium (strain 104).